Reading from the N-terminus, the 275-residue chain is Ribosomal RNA small subunit methyltransferase A (275 aa).

The S-adenosyl-L-methionine site is built by Asn28, Leu30, Gly55, Glu77, Asp103, and Asn123.

It belongs to the class I-like SAM-binding methyltransferase superfamily. rRNA adenine N(6)-methyltransferase family. RsmA subfamily.

The protein resides in the cytoplasm. The catalysed reaction is adenosine(1518)/adenosine(1519) in 16S rRNA + 4 S-adenosyl-L-methionine = N(6)-dimethyladenosine(1518)/N(6)-dimethyladenosine(1519) in 16S rRNA + 4 S-adenosyl-L-homocysteine + 4 H(+). Specifically dimethylates two adjacent adenosines (A1518 and A1519) in the loop of a conserved hairpin near the 3'-end of 16S rRNA in the 30S particle. May play a critical role in biogenesis of 30S subunits. The sequence is that of Ribosomal RNA small subunit methyltransferase A from Allorhizobium ampelinum (strain ATCC BAA-846 / DSM 112012 / S4) (Agrobacterium vitis (strain S4)).